Consider the following 305-residue polypeptide: Methionyl-tRNA formyltransferase (305 aa).

111-114 is a (6S)-5,6,7,8-tetrahydrofolate binding site; the sequence is SLLP.

It belongs to the Fmt family.

The catalysed reaction is L-methionyl-tRNA(fMet) + (6R)-10-formyltetrahydrofolate = N-formyl-L-methionyl-tRNA(fMet) + (6S)-5,6,7,8-tetrahydrofolate + H(+). Its function is as follows. Attaches a formyl group to the free amino group of methionyl-tRNA(fMet). The formyl group appears to play a dual role in the initiator identity of N-formylmethionyl-tRNA by promoting its recognition by IF2 and preventing the misappropriation of this tRNA by the elongation apparatus. This is Methionyl-tRNA formyltransferase from Campylobacter jejuni (strain RM1221).